A 330-amino-acid polypeptide reads, in one-letter code: Probable L-asparaginase (330 aa).

An Asparaginase/glutaminase domain is found at 6-330 (PTIALLATGG…EKIQEMFEEY (325 aa)). Thr16 serves as the catalytic O-isoaspartyl threonine intermediate. Substrate-binding positions include Ser62 and 95-96 (TD).

Belongs to the asparaginase 1 family.

It localises to the cytoplasm. The catalysed reaction is L-asparagine + H2O = L-aspartate + NH4(+). The chain is Probable L-asparaginase (ansA) from Helicobacter pylori (strain ATCC 700392 / 26695) (Campylobacter pylori).